A 30-amino-acid chain; its full sequence is Trypsin inhibitor 4 (30 aa).

Intrachain disulfides connect Cys3/Cys20, Cys10/Cys22, and Cys16/Cys29.

It belongs to the protease inhibitor I7 (squash-type serine protease inhibitor) family.

It is found in the secreted. Functionally, inhibits trypsin. The protein is Trypsin inhibitor 4 of Cucumis sativus (Cucumber).